Here is a 147-residue protein sequence, read N- to C-terminus: Large ribosomal subunit protein uL16 (147 aa).

This sequence belongs to the universal ribosomal protein uL16 family. In terms of assembly, part of the 50S ribosomal subunit.

Functionally, binds 23S rRNA and is also seen to make contacts with the A and possibly P site tRNAs. This Clostridium acetobutylicum (strain ATCC 824 / DSM 792 / JCM 1419 / IAM 19013 / LMG 5710 / NBRC 13948 / NRRL B-527 / VKM B-1787 / 2291 / W) protein is Large ribosomal subunit protein uL16.